The primary structure comprises 475 residues: UDP-glycosyltransferase 708A6 (475 aa).

UDP-alpha-D-glucose contacts are provided by residues S286, 348-349 (WV), 366-374 (HCGWNSLTE), and 388-391 (FGDQ).

It belongs to the UDP-glycosyltransferase family. As to expression, expressed in radicles, hypocotyls and juvenile leaves. Expressed at low levels in roots.

Bifunctional glycosyltransferase that can produce both C- and O-glycosidated flavonoids. Converts 2-hydroxynaringenin to isovitexin. Converts eriodictyol to orientin and isoorientin. Converts naringenin and eriodictyol to naringenin 7-O-glucoside and eriodictyol 7-O-glucoside, respectively. This Zea mays (Maize) protein is UDP-glycosyltransferase 708A6.